The sequence spans 224 residues: UPF0173 metal-dependent hydrolase TON_1314 (224 aa).

It belongs to the UPF0173 family.

The chain is UPF0173 metal-dependent hydrolase TON_1314 from Thermococcus onnurineus (strain NA1).